Consider the following 172-residue polypeptide: uncharacterized protein (172 aa).

Positions 1-29 (MKKKQVMLALTAAAGLGLTALHSAPAAKA) are cleaved as a signal peptide. 2 consecutive SH3b domains span residues 42-105 (SDTY…MKTA) and 112-172 (KQTA…LQMR).

This is an uncharacterized protein from Bacillus subtilis (strain 168).